A 517-amino-acid chain; its full sequence is Methylmalonyl-CoA decarboxylase subunit alpha (517 aa).

The 257-residue stretch at 4–260 (AAKKIQDLQK…NNMEKAPEFG (257 aa)) folds into the CoA carboxyltransferase N-terminal domain. A CoA carboxyltransferase C-terminal domain is found at 271 to 513 (ELDALMPDNP…REKLPAKKHG (243 aa)).

The protein belongs to the AccD/PCCB family. As to quaternary structure, the methylmalonyl-CoA decarboxylase is composed of four subunits: the carboxyltransferase alpha subunit (MmdA), the tunnel beta subunit (MmdB), the biotin-containing gamma subunit (MmdC) and the delta subunit (MmdD).

The protein resides in the cell membrane. It carries out the reaction (S)-methylmalonyl-CoA + Na(+)(in) + H(+)(out) = propanoyl-CoA + Na(+)(out) + CO2. Carboxyltransferase subunit of the sodium ion pump methylmalonyl-CoA decarboxylase, which converts the chemical energy of a decarboxylation reaction into an electrochemical gradient of Na(+) ions across the cytoplasmic membrane, thereby creating a sodium ion motive force that is used for ATP synthesis. The alpha subunit catalyzes the Na(+)-independent carboxyltransfer from methylmalonyl-CoA to the prosthetic biotin group located on the gamma subunit. This is Methylmalonyl-CoA decarboxylase subunit alpha from Propionigenium modestum.